A 364-amino-acid polypeptide reads, in one-letter code: Tyrosine--tRNA ligase (364 aa).

Y39 is an L-tyrosine binding site. The ATP site is built by H49 and W52. 4 residues coordinate L-tyrosine: Y165, Q169, D172, and Q187. A 'KMSKS' region motif is present at residues 238 to 242 (KMSKS). Residue K241 participates in ATP binding.

This sequence belongs to the class-I aminoacyl-tRNA synthetase family. TyrS type 4 subfamily. Homodimer.

It localises to the cytoplasm. The enzyme catalyses tRNA(Tyr) + L-tyrosine + ATP = L-tyrosyl-tRNA(Tyr) + AMP + diphosphate + H(+). Functionally, catalyzes the attachment of tyrosine to tRNA(Tyr) in a two-step reaction: tyrosine is first activated by ATP to form Tyr-AMP and then transferred to the acceptor end of tRNA(Tyr). In Aeropyrum pernix (strain ATCC 700893 / DSM 11879 / JCM 9820 / NBRC 100138 / K1), this protein is Tyrosine--tRNA ligase.